A 119-amino-acid polypeptide reads, in one-letter code: MARVKKGVTARKRHKKVLKLAKGFRGARSKLFRPANQFVMKALRHAYVGRKLRKRDFRRLWITRINAATRINGLSYSKFISGLKLSGIEMNRKVLSEMAIHDKEGFAQLVETAKQKLNA.

The protein belongs to the bacterial ribosomal protein bL20 family.

In terms of biological role, binds directly to 23S ribosomal RNA and is necessary for the in vitro assembly process of the 50S ribosomal subunit. It is not involved in the protein synthesizing functions of that subunit. The polypeptide is Large ribosomal subunit protein bL20 (Alkaliphilus metalliredigens (strain QYMF)).